A 183-amino-acid chain; its full sequence is MDIDPYKEFGASVELLSFLPSDFFPSIRDLLDTASALYREALESPEHCSPHHTALRQAILCWGELMNLATWVGSNLEDPASRELVVSYVNVNMGLKIRQLLWFHISCLTFGRETVLEYLVSFGVWIRTPPAYRPPNAPILSTLPETTVVRRRGRSPRRRTPSPRRRRSESPRRRRSQSRESQC.

The tract at residues 136–183 (NAPILSTLPETTVVRRRGRSPRRRTPSPRRRRSESPRRRRSQSRESQC) is disordered. Over residues 149–176 (VRRRGRSPRRRTPSPRRRRSESPRRRRS) the composition is skewed to basic residues. Phosphoserine; by host occurs at positions 155, 162, and 170. One copy of the 1; half-length repeat lies at 155–160 (SPRRRT). The tract at residues 155 to 176 (SPRRRTPSPRRRRSESPRRRRS) is 3 X 7 AA repeats of S-P-R-R-R-[PR]-S. Positions 158-175 (RRTPSPRRRRSESPRRRR) match the Bipartite nuclear localization signal motif. 2 consecutive repeat copies span residues 162–168 (SPRRRRS) and 170–176 (SPRRRRS). Residues 177–183 (QSRESQC) are RNA binding.

It belongs to the orthohepadnavirus core antigen family. Homodimerizes, then multimerizes. Interacts with cytosol exposed regions of viral L glycoprotein present in the reticulum-to-Golgi compartment. Interacts with human FLNB. Phosphorylated form interacts with host importin alpha; this interaction depends on the exposure of the NLS, which itself depends upon genome maturation and/or phosphorylation of the capsid protein. Interacts with host NUP153. In terms of processing, phosphorylated by host SRPK1, SRPK2, and maybe protein kinase C or GAPDH. Phosphorylation is critical for pregenomic RNA packaging. Protein kinase C phosphorylation is stimulated by HBx protein and may play a role in transport of the viral genome to the nucleus at the late step during the viral replication cycle.

The protein resides in the virion. It is found in the host cytoplasm. Its function is as follows. Self assembles to form an icosahedral capsid. Most capsids appear to be large particles with an icosahedral symmetry of T=4 and consist of 240 copies of capsid protein, though a fraction forms smaller T=3 particles consisting of 180 capsid proteins. Entering capsids are transported along microtubules to the nucleus. Phosphorylation of the capsid is thought to induce exposure of nuclear localization signal in the C-terminal portion of the capsid protein that allows binding to the nuclear pore complex via the importin (karyopherin-) alpha and beta. Capsids are imported in intact form through the nuclear pore into the nuclear basket, where it probably binds NUP153. Only capsids that contain the mature viral genome can release the viral DNA and capsid protein into the nucleoplasm. Immature capsids get stuck in the basket. Capsids encapsulate the pre-genomic RNA and the P protein. Pre-genomic RNA is reverse-transcribed into DNA while the capsid is still in the cytoplasm. The capsid can then either be directed to the nucleus, providing more genomes for transcription, or bud through the endoplasmic reticulum to provide new virions. The chain is Capsid protein from Homo sapiens (Human).